The sequence spans 277 residues: Thymidylate synthase (277 aa).

Residue R27 coordinates dUMP. H57 provides a ligand contact to (6R)-5,10-methylene-5,6,7,8-tetrahydrofolate. DUMP is bound at residue 132 to 133; sequence RR. C152 acts as the Nucleophile in catalysis. Residues 179 to 182, N190, and 220 to 222 each bind dUMP; these read RSAD and HIY. A (6R)-5,10-methylene-5,6,7,8-tetrahydrofolate-binding site is contributed by D182. A (6R)-5,10-methylene-5,6,7,8-tetrahydrofolate-binding site is contributed by A276.

Belongs to the thymidylate synthase family. Bacterial-type ThyA subfamily. In terms of assembly, homodimer.

It localises to the cytoplasm. It carries out the reaction dUMP + (6R)-5,10-methylene-5,6,7,8-tetrahydrofolate = 7,8-dihydrofolate + dTMP. Its pathway is pyrimidine metabolism; dTTP biosynthesis. Catalyzes the reductive methylation of 2'-deoxyuridine-5'-monophosphate (dUMP) to 2'-deoxythymidine-5'-monophosphate (dTMP) while utilizing 5,10-methylenetetrahydrofolate (mTHF) as the methyl donor and reductant in the reaction, yielding dihydrofolate (DHF) as a by-product. This enzymatic reaction provides an intracellular de novo source of dTMP, an essential precursor for DNA biosynthesis. The polypeptide is Thymidylate synthase (Acidovorax sp. (strain JS42)).